Here is a 169-residue protein sequence, read N- to C-terminus: Der GTPase-activating protein YihI (169 aa).

Disordered stretches follow at residues 1 to 92 (MKPS…EKPM) and 146 to 169 (SYDD…LRGN). Residues 10 to 19 (SKGHAKARRK) show a composition bias toward basic residues. Basic and acidic residues predominate over residues 20 to 30 (TREELDQEARD). Basic residues predominate over residues 31-40 (RKRQKKRRGH). Over residues 49 to 58 (GNTTSGSKGQ) the composition is skewed to polar residues. The segment covering 147 to 159 (YDDDEEEEEDEKQ) has biased composition (acidic residues). A compositionally biased stretch (basic and acidic residues) spans 160–169 (EDMMRLLRGN).

Belongs to the YihI family. As to quaternary structure, interacts with Der.

A GTPase-activating protein (GAP) that modifies Der/EngA GTPase function. May play a role in ribosome biogenesis. The chain is Der GTPase-activating protein YihI from Escherichia coli O1:K1 / APEC.